The primary structure comprises 320 residues: Tabersonine synthase (320 aa).

Positions 78-80 (HGA) match the Involved in the stabilization of the negatively charged intermediate by the formation of the oxyanion hole motif. A (-)-tabersonine-binding site is contributed by G81. The active-site Proton acceptor is the S170. Residue D266 is part of the active site. Y297 is a (-)-tabersonine binding site. Y297 (proton donor/acceptor) is an active-site residue.

This sequence belongs to the 'GDXG' lipolytic enzyme family. In terms of assembly, interacts with dehydroprecondylocarpine acetate synthase (DPAS). As to expression, expressed in leaf epidermis.

It localises to the cytoplasm. The protein resides in the cytosol. It is found in the nucleus. The catalysed reaction is dehydrosecodine = (-)-tabersonine. The enzyme catalyses dihydroprecondylocarpine acetate = (-)-tabersonine + acetate + H(+). Its pathway is alkaloid biosynthesis. Component of iboga and aspidosperma monoterpenoid indole alkaloids (MIAs, e.g. tabersonine and catharanthine) biosynthesis pathway from 19E-geissoschizine, psychoactive compounds likely to be used in the treatment of opioid dependence. Catalyzes the conversion of dehydrosecodine to tabersonine, a precursor of vindoline; this process starts with the conversion of dihydroprecondylocarpine acetate to dehydrosecodine. The sequence is that of Tabersonine synthase from Catharanthus roseus (Madagascar periwinkle).